Here is a 211-residue protein sequence, read N- to C-terminus: 3-demethoxyubiquinol 3-hydroxylase (211 aa).

Residues Glu-60, Glu-90, His-93, Glu-142, Glu-174, and His-177 each coordinate Fe cation.

This sequence belongs to the COQ7 family. Fe cation is required as a cofactor.

The protein localises to the cell membrane. It catalyses the reaction a 5-methoxy-2-methyl-3-(all-trans-polyprenyl)benzene-1,4-diol + AH2 + O2 = a 3-demethylubiquinol + A + H2O. The protein operates within cofactor biosynthesis; ubiquinone biosynthesis. In terms of biological role, catalyzes the hydroxylation of 2-nonaprenyl-3-methyl-6-methoxy-1,4-benzoquinol during ubiquinone biosynthesis. The protein is 3-demethoxyubiquinol 3-hydroxylase of Acinetobacter baumannii (strain AB307-0294).